The following is a 401-amino-acid chain: Argininosuccinate synthase (401 aa).

9-17 is an ATP binding site; the sequence is AYSGGLDTS. Tyr86 is a binding site for L-citrulline. Position 116 (Gly116) interacts with ATP. The L-aspartate site is built by Thr118, Asn122, and Asp123. Asn122 provides a ligand contact to L-citrulline. The L-citrulline site is built by Arg126, Ser174, Ser183, Glu259, and Tyr271.

Belongs to the argininosuccinate synthase family. Type 1 subfamily. Homotetramer.

It localises to the cytoplasm. The catalysed reaction is L-citrulline + L-aspartate + ATP = 2-(N(omega)-L-arginino)succinate + AMP + diphosphate + H(+). Its pathway is amino-acid biosynthesis; L-arginine biosynthesis; L-arginine from L-ornithine and carbamoyl phosphate: step 2/3. The chain is Argininosuccinate synthase from Bacillus cereus (strain AH187).